Reading from the N-terminus, the 282-residue chain is Stage 0 sporulation protein J (282 aa).

Positions 139-158 form a DNA-binding region, H-T-H motif; sequence EQLAKRLGKSRPHIANHLRL.

It belongs to the ParB family.

The protein resides in the cytoplasm. It is found in the nucleoid. Its function is as follows. Required for the initiation of sporulation and for normal chromosome segregation. Antagonizes sporulation inhibition by Soj. It probably interacts with a specific DNA site and other proteins involved in partitioning and cell division, and antagonizes Soj in response to cell cycle events related to chromosome partitioning. This chain is Stage 0 sporulation protein J, found in Bacillus subtilis (strain 168).